A 349-amino-acid chain; its full sequence is Aldehyde reductase YahK (349 aa).

Zn(2+) is bound by residues cysteine 40, histidine 62, cysteine 93, cysteine 96, cysteine 99, cysteine 107, and cysteine 158.

This sequence belongs to the zinc-containing alcohol dehydrogenase family. Requires Zn(2+) as cofactor.

It carries out the reaction a primary alcohol + NADP(+) = an aldehyde + NADPH + H(+). In terms of biological role, catalyzes the reduction of a wide range of aldehydes into their corresponding alcohols. Has a strong preference for NADPH over NADH as the electron donor. Cannot use a ketone as substrate. Is a major source of NADPH-dependent aldehyde reductase activity in E.coli. The in vivo functions of YahK has yet to be determined. This chain is Aldehyde reductase YahK (yahK), found in Escherichia coli (strain K12).